The following is a 693-amino-acid chain: Polyribonucleotide nucleotidyltransferase (693 aa).

2 residues coordinate Mg(2+): Asp-489 and Asp-495. A KH domain is found at 556–615 (PQIHVMNINPAKIKDVVGRGGATVKGIVEKTGAQIDTSDSGEVKVFAKDKKSMDMAVAMI). An S1 motif domain is found at 625–693 (GQVYKGKIVK…GRVKLSLVAR (69 aa)).

It belongs to the polyribonucleotide nucleotidyltransferase family. In terms of assembly, component of the RNA degradosome, which is a multiprotein complex involved in RNA processing and mRNA degradation. It depends on Mg(2+) as a cofactor.

It is found in the cytoplasm. The catalysed reaction is RNA(n+1) + phosphate = RNA(n) + a ribonucleoside 5'-diphosphate. Its function is as follows. Involved in mRNA degradation. Catalyzes the phosphorolysis of single-stranded polyribonucleotides processively in the 3'- to 5'-direction. The polypeptide is Polyribonucleotide nucleotidyltransferase (Francisella tularensis subsp. mediasiatica (strain FSC147)).